The primary structure comprises 275 residues: Trans-aconitate 2-methyltransferase (275 aa).

This sequence belongs to the methyltransferase superfamily. Tam family.

It is found in the cytoplasm. The catalysed reaction is trans-aconitate + S-adenosyl-L-methionine = (E)-3-(methoxycarbonyl)pent-2-enedioate + S-adenosyl-L-homocysteine. Its function is as follows. Catalyzes the S-adenosylmethionine monomethyl esterification of trans-aconitate. The polypeptide is Trans-aconitate 2-methyltransferase (Pseudomonas aeruginosa (strain ATCC 15692 / DSM 22644 / CIP 104116 / JCM 14847 / LMG 12228 / 1C / PRS 101 / PAO1)).